Consider the following 214-residue polypeptide: MIKVALPKGRLFEETVDLLLKRGIIEKRIEEGRKLILEEGGITFFLVKPSDVPVYVESGVSDLGVCGYDVYLEKKPSVYRLMDLGIGFCRIAVAGKPESEEKYFSSTHISVATKYPNIAYEFFKKKGVKADIYYLNGSVELAPLVGLSDFILDLVQTGRTLKENGLIVIEEVGKSTAWLIANKDSFRIKNGQIMEFLSRLVQHNKDGLQVQGSS.

It belongs to the ATP phosphoribosyltransferase family. Short subfamily. As to quaternary structure, heteromultimer composed of HisG and HisZ subunits.

It is found in the cytoplasm. The enzyme catalyses 1-(5-phospho-beta-D-ribosyl)-ATP + diphosphate = 5-phospho-alpha-D-ribose 1-diphosphate + ATP. Its pathway is amino-acid biosynthesis; L-histidine biosynthesis; L-histidine from 5-phospho-alpha-D-ribose 1-diphosphate: step 1/9. Its function is as follows. Catalyzes the condensation of ATP and 5-phosphoribose 1-diphosphate to form N'-(5'-phosphoribosyl)-ATP (PR-ATP). Has a crucial role in the pathway because the rate of histidine biosynthesis seems to be controlled primarily by regulation of HisG enzymatic activity. The sequence is that of ATP phosphoribosyltransferase (hisG) from Aquifex aeolicus (strain VF5).